A 1389-amino-acid chain; its full sequence is Carboxypeptidase D (1389 aa).

A signal peptide spans 1-25 (MAGAARGLLWAALSLCLLPEPLRAA). Topologically, residues 26-1308 (HIKKAEAAAA…ENRIFGLPRE (1283 aa)) are extracellular. Residues 46–383 (RYLHAAELGQ…ESLLTFIEKV (338 aa)) enclose the Peptidase M14 1 domain. The interval 95 to 133 (LPEARQDGEKKKKEEEEEEEEEEGEEGGGGALPGRPQVK) is disordered. Residues 96-108 (PEARQDGEKKKKE) show a composition bias toward basic and acidic residues. Residues 109–120 (EEEEEEEEEGEE) are compositionally biased toward acidic residues. Residues His-139 and Glu-142 each contribute to the Zn(2+) site. Asn-172 carries N-linked (GlcNAc...) asparagine glycosylation. The segment at 188–235 (ERAREGDCGGGGGGGGEGGGEPGGRENSRGRDLNRSFPDQFGSAQPDL) is disordered. The span at 195–209 (CGGGGGGGGEGGGEP) shows a compositional bias: gly residues. The span at 210-221 (GGRENSRGRDLN) shows a compositional bias: basic and acidic residues. Asn-221 carries an N-linked (GlcNAc...) asparagine glycan. Residue His-260 participates in Zn(2+) binding. Glu-353 serves as the catalytic Proton donor/acceptor. Residues Asn-402, Asn-413, Asn-432, and Asn-472 are each glycosylated (N-linked (GlcNAc...) asparagine). A Peptidase M14 2 domain is found at 511–801 (RHHHFSDMEI…RSLLQFIKQV (291 aa)). Residues His-573 and Glu-576 each contribute to the Zn(2+) site. The tract at residues 614-639 (SMNPDGYEKSQEGDRGGTVGRNNSNN) is disordered. Over residues 619 to 628 (GYEKSQEGDR) the composition is skewed to basic and acidic residues. A glycan (N-linked (GlcNAc...) asparagine) is linked at Asn-635. His-680 is a Zn(2+) binding site. Glu-771 serves as the catalytic Proton donor/acceptor. N-linked (GlcNAc...) asparagine glycans are attached at residues Asn-820, Asn-876, Asn-958, Asn-981, Asn-1073, and Asn-1151. Positions 935–1220 (RYRPYKDLSE…KSLLSMLVEV (286 aa)) constitute a Peptidase M14 3 domain. Residues 1309 to 1329 (LVVTVAGASMSALVLTACIIW) form a helical membrane-spanning segment. S-palmitoyl cysteine attachment occurs at residues Cys-1326, Cys-1330, and Cys-1332. Over 1330–1389 (CVCSIKSNRHKDGFPTLRQHHDDYEDEIRMMSTGSKKSLLSHEFQDETDTEEETLYSSKH) the chain is Cytoplasmic. Positions 1367 to 1389 (SLLSHEFQDETDTEEETLYSSKH) are disordered.

It belongs to the peptidase M14 family. As to quaternary structure, binds to pre-S, hepatitis B virus large envelope protein, via the carboxypeptidase-like domain. Zn(2+) is required as a cofactor. Post-translationally, the N-terminus is blocked. As to expression, expressed in liver, lung, kidney, heart, stomach, pancreas, spleen, gall bladder and intestine, but not in skeletal muscle.

Its subcellular location is the cell membrane. The enzyme catalyses Releases C-terminal Arg and Lys from polypeptides.. The protein is Carboxypeptidase D (CPD) of Anas platyrhynchos (Mallard).